Reading from the N-terminus, the 510-residue chain is 2,3-bisphosphoglycerate-independent phosphoglycerate mutase (510 aa).

Mn(2+) is bound by residues aspartate 14 and serine 64. Serine 64 acts as the Phosphoserine intermediate in catalysis. Substrate-binding positions include histidine 125, 155 to 156 (RD), arginine 187, arginine 193, 259 to 262 (RADR), and lysine 332. Residues aspartate 399, histidine 403, aspartate 440, histidine 441, and histidine 459 each coordinate Mn(2+).

This sequence belongs to the BPG-independent phosphoglycerate mutase family. Monomer. Requires Mn(2+) as cofactor.

The catalysed reaction is (2R)-2-phosphoglycerate = (2R)-3-phosphoglycerate. It functions in the pathway carbohydrate degradation; glycolysis; pyruvate from D-glyceraldehyde 3-phosphate: step 3/5. In terms of biological role, catalyzes the interconversion of 2-phosphoglycerate and 3-phosphoglycerate. The sequence is that of 2,3-bisphosphoglycerate-independent phosphoglycerate mutase from Pseudomonas syringae pv. syringae (strain B728a).